The sequence spans 801 residues: Protein ACCUMULATION AND REPLICATION OF CHLOROPLASTS 6, chloroplastic (801 aa).

A chloroplast-targeting transit peptide spans Met-1–Thr-67. Over Ala-68–Lys-618 the chain is Stromal. The 65-residue stretch at Asp-89–Leu-153 folds into the J domain. The helical transmembrane segment at Ile-619–Leu-638 threads the bilayer. Residues Lys-639–Ser-801 lie on the Chloroplast intermembrane side of the membrane. An interaction with PDV2 region spans residues Lys-639 to Ser-801.

In terms of assembly, self-interacts. Part of a complex made of ARC3, ARC6, FTSZ1 and FTSZ2. Interacts with FTSZ2-1 and FTSZ2-2 (via C-terminus), but not with FTSZ1; this interaction enables ARC3 binding to FTSZ2. Binds to CDT1A. Interacts (via C-terminus) with PDV2 (via C-terminus) in the chloroplast intermembrane space; this interaction induces homodimerization and leads to the formation of a heterotetramer containing two ARC6 and two PDV2 subunits. Interacts with MCD1 in the chloroplast stroma and facilitates its subsequent binding to FtsZ2-1. Interacts (via J domain) with CJD1 (via J-like domain). Mostly expressed in young leaves.

The protein localises to the plastid. It localises to the chloroplast inner membrane. In terms of biological role, component of the plastid division machinery consisting in a binary fission accomplished by the simultaneous constriction of the FtsZ ring on the stromal side of the inner envelope membrane, and the ARC5 ring on the cytosolic side of the outer envelope membrane. Involved in the initiation of proplastid and plastid division (including chloroplasts, statoliths and leukoplasts). Promotes the assembly and/or stabilization of the plastid-dividing FtsZ ring, functioning as an antagonistic regulator of FtsZ dynamics against CDP1 and facilitating MCD1 positioning to membrane tethered FtsZ filaments to form the chloroplast Z-Ring; inhibits GDP-induced disassembly of FTSZ2 but enables ARC3 binding to FTSZ2-1. Relays plastid division site position between stroma and outer surface via interactions with the stromal FtsZ ring and the outer membrane PDV2 that recruits cytoplasmic ARC5 ring. Required for plastid equatorial positioning of PDV2 and ARC5. May contribute to gravitropism in stems and hypocotyls. Seems to influence stromule (stroma-filled tubular extensions of the plastid envelope membrane) length and frequency. The polypeptide is Protein ACCUMULATION AND REPLICATION OF CHLOROPLASTS 6, chloroplastic (Arabidopsis thaliana (Mouse-ear cress)).